The following is a 177-amino-acid chain: Large ribosomal subunit protein bL19 (177 aa).

This sequence belongs to the bacterial ribosomal protein bL19 family.

In terms of biological role, this protein is located at the 30S-50S ribosomal subunit interface and may play a role in the structure and function of the aminoacyl-tRNA binding site. The protein is Large ribosomal subunit protein bL19 of Rhizobium meliloti (strain 1021) (Ensifer meliloti).